The following is a 207-amino-acid chain: Small ribosomal subunit protein uS4c (207 aa).

The 64-residue stretch at 92–155 (MRLDNILFRL…TYQSILSKRI (64 aa)) folds into the S4 RNA-binding domain.

Belongs to the universal ribosomal protein uS4 family. Part of the 30S ribosomal subunit. Contacts protein S5. The interaction surface between S4 and S5 is involved in control of translational fidelity.

The protein localises to the plastid. The protein resides in the chloroplast. Its function is as follows. One of the primary rRNA binding proteins, it binds directly to 16S rRNA where it nucleates assembly of the body of the 30S subunit. With S5 and S12 plays an important role in translational accuracy. The chain is Small ribosomal subunit protein uS4c (rps4) from Equisetum giganteum (Giant horsetail).